A 255-amino-acid polypeptide reads, in one-letter code: Ribonuclease HII (255 aa).

In terms of domain architecture, RNase H type-2 spans 72 to 255; the sequence is AIICGIDEVG…KSFEPIKSLL (184 aa). A divalent metal cation contacts are provided by Asp-78, Glu-79, and Asp-170.

Belongs to the RNase HII family. Mn(2+) serves as cofactor. The cofactor is Mg(2+).

It is found in the cytoplasm. It catalyses the reaction Endonucleolytic cleavage to 5'-phosphomonoester.. Functionally, endonuclease that specifically degrades the RNA of RNA-DNA hybrids. This chain is Ribonuclease HII, found in Staphylococcus aureus (strain MRSA252).